A 393-amino-acid polypeptide reads, in one-letter code: Protein TsgA (393 aa).

Transmembrane regions (helical) follow at residues 11–31 (WISFLSYALTGALVIVTGMVM), 51–71 (FLNAGILISIFLNAWLMEIVP), 78–98 (FGFLLMVLAVAGLMFSHSLAL), 101–121 (TAMFILGVVSGITMSIGTFLI), 140–160 (FFSMAGMIFPMIAAFLLAHSI), 162–182 (WYWVYACIGLVYVAIFILTFG), 206–226 (IGVLFLSVAALCYILGQLGFI), 245–265 (TLVSNFWMSYMVGMWAFSFIL), 273–293 (ILTVLAGLAAILMYVFNTGTP), 297–317 (AWSILALGFFSSAIYTTIITL), 332–352 (FVLTCGTIGTMLTFVVTGPIV), and 361–381 (LLTANGLYAVVFVMCFLLGFV).

This sequence belongs to the major facilitator superfamily. TsgA family.

The protein resides in the cell inner membrane. This Shigella boydii serotype 18 (strain CDC 3083-94 / BS512) protein is Protein TsgA.